We begin with the raw amino-acid sequence, 939 residues long: AP-2 complex subunit alpha (939 aa).

Basic and acidic residues predominate over residues 623-633 (RVPENEIRESK). The tract at residues 623–660 (RVPENEIRESKSPAPTSGPGSVLQNNVHVNNSHSKLNN) is disordered. Residues 635-660 (PAPTSGPGSVLQNNVHVNNSHSKLNN) are compositionally biased toward polar residues.

Belongs to the adapter complexes large subunit family. In terms of assembly, adaptor protein complex 2 (AP-2) is a heterotetramer composed of two large adaptins (alpha-type and beta-type subunits), a medium adaptin (mu-type subunit AP50) and a small adaptin (sigma-type subunit AP17).

Its subcellular location is the cell membrane. The protein resides in the membrane. It is found in the coated pit. In terms of biological role, adaptins are components of the adapter complexes which link clathrin to receptors in coated vesicles. Clathrin-associated protein complexes are believed to interact with the cytoplasmic tails of membrane proteins, leading to their selection and concentration. Alpha adaptin is a subunit of the plasma membrane adapter. The polypeptide is AP-2 complex subunit alpha (Drosophila pseudoobscura pseudoobscura (Fruit fly)).